Here is a 405-residue protein sequence, read N- to C-terminus: Acetate kinase (405 aa).

Asparagine 7 is a Mg(2+) binding site. Lysine 14 is an ATP binding site. Arginine 90 provides a ligand contact to substrate. The active-site Proton donor/acceptor is the aspartate 147. ATP contacts are provided by residues 207-211 (HLGNG), 282-284 (DMR), and 330-334 (GVGEN). Glutamate 383 provides a ligand contact to Mg(2+).

Belongs to the acetokinase family. As to quaternary structure, homodimer. Requires Mg(2+) as cofactor. The cofactor is Mn(2+).

Its subcellular location is the cytoplasm. The enzyme catalyses acetate + ATP = acetyl phosphate + ADP. Its pathway is metabolic intermediate biosynthesis; acetyl-CoA biosynthesis; acetyl-CoA from acetate: step 1/2. In terms of biological role, catalyzes the formation of acetyl phosphate from acetate and ATP. Can also catalyze the reverse reaction. The protein is Acetate kinase of Pseudothermotoga lettingae (strain ATCC BAA-301 / DSM 14385 / NBRC 107922 / TMO) (Thermotoga lettingae).